The sequence spans 37 residues: Cytochrome b6-f complex subunit 5 (37 aa).

The chain crosses the membrane as a helical span at residues 5–25; it reads LLSGIILGLIPVTLSGLLVAA.

This sequence belongs to the PetG family. The 4 large subunits of the cytochrome b6-f complex are cytochrome b6, subunit IV (17 kDa polypeptide, PetD), cytochrome f and the Rieske protein, while the 4 small subunits are PetG, PetL, PetM and PetN. The complex functions as a dimer.

It is found in the plastid. It localises to the chloroplast thylakoid membrane. Its function is as follows. Component of the cytochrome b6-f complex, which mediates electron transfer between photosystem II (PSII) and photosystem I (PSI), cyclic electron flow around PSI, and state transitions. PetG is required for either the stability or assembly of the cytochrome b6-f complex. This is Cytochrome b6-f complex subunit 5 from Porphyra purpurea (Red seaweed).